Consider the following 699-residue polypeptide: Endogenous retrovirus group K member 19 Env polyprotein (699 aa).

Positions 1 to 47 (MNPSEMQRKAPPRRRRHRNRAPLTHKMNKMVTSEEQMKLPSTKKAEP) are disordered. Positions 1–89 (MNPSEMQRKA…ALMIVSMVVS (89 aa)) are cleaved as a signal peptide. Over residues 10-20 (APPRRRRHRNR) the composition is skewed to basic residues. At 90-632 (LPMPAGAAAA…NLNPVTWVKT (543 aa)) the chain is on the extracellular side. Asparagine 100, asparagine 128, asparagine 153, asparagine 274, asparagine 355, asparagine 372, and asparagine 461 each carry an N-linked (GlcNAc...) asparagine glycan. Residues 466–486 (FIFTLIAVIMGLIAVTATAAV) form a fusion peptide region. N-linked (GlcNAc...) asparagine glycans are attached at residues asparagine 507, asparagine 554, asparagine 566, and asparagine 585. Residues 633–653 (IGSTTIINLILILVCLFCLLL) traverse the membrane as a helical segment. Over 654–699 (VCRCTQQLRRDSDHRERAMMTMAVLSKRKGGNVGKSKRDQIVTVSV) the chain is Cytoplasmic.

It belongs to the beta type-B retroviral envelope protein family. HERV class-II K(HML-2) env subfamily. As to quaternary structure, the surface (SU) and transmembrane (TM) proteins form a heterodimer. SU and TM are attached by noncovalent interactions or by a labile interchain disulfide bond. Post-translationally, specific enzymatic cleavages in vivo yield the mature SU and TM proteins.

The protein localises to the cell membrane. The protein resides in the virion. In terms of biological role, retroviral envelope proteins mediate receptor recognition and membrane fusion during early infection. Endogenous envelope proteins may have kept, lost or modified their original function during evolution. This endogenous envelope protein has lost its original fusogenic properties. Functionally, SU mediates receptor recognition. Its function is as follows. TM anchors the envelope heterodimer to the viral membrane through one transmembrane domain. The other hydrophobic domain, called fusion peptide, mediates fusion of the viral membrane with the target cell membrane. The protein is Endogenous retrovirus group K member 19 Env polyprotein (ERVK-19) of Homo sapiens (Human).